Consider the following 1052-residue polypeptide: F-box/WD repeat-containing protein 10 (1052 aa).

One copy of the WD 1 repeat lies at 169 to 206 (GLNQDITDVCFSPEKDHSSKSATSQVYWTAKTQHTSLP). An F-box domain is found at 276–323 (DFIRYLPIHLSKYILRMLDRHTLNKCASVSQHWAAMAQQVKMDLSAHG). WD repeat units follow at residues 409-447 (SDTWDQNRVIHYSGGDLIAVSSNRKIHLLDIIQVKAIPV), 451-490 (GHAGSVRALFLCEEENFLLSGSYDLSIRYWDLKSGVCTRI), 493-532 (GHQGTITCMDLCKNRLVSGGRDCQVKVWDVDTGKCLKTFR), 534-569 (KDPILATRINDTYIVSSCERGLVKVWHIAMAQLVKT), 572-609 (GHEGAVKCLFFDQWHLLSGSTDGLVMAWSMVGKYERCL), and 611-652 (AFKH…KVLK). A coiled-coil region spans residues 690 to 719 (YAVEKTKQKKNKEKEEEKEENSLMEILSKC). A disordered region spans residues 766–805 (LQSQGKSKSPRRDADDVEKAQKQGQLETPGKLPSHPKKKS). Basic and acidic residues predominate over residues 775 to 786 (PRRDADDVEKAQ). Residues 986 to 1010 (VLLTVKEEKEHQEAKMKEYQAREST) are a coiled coil.

Functionally, probable substrate-recognition component of a SCF (SKP1-CUL1-F-box protein)-type E3 ubiquitin ligase complex which mediates the ubiquitination and subsequent proteasomal degradation of target proteins. Overexpression is leading to degradation of CBX5 and CBX1. This is F-box/WD repeat-containing protein 10 (FBXW10) from Homo sapiens (Human).